Here is a 129-residue protein sequence, read N- to C-terminus: Small ribosomal subunit protein uS11c (129 aa).

It belongs to the universal ribosomal protein uS11 family. In terms of assembly, part of the 30S ribosomal subunit.

The protein localises to the plastid. It is found in the chloroplast. The chain is Small ribosomal subunit protein uS11c from Pleurastrum terricola (Filamentous green alga).